The following is a 378-amino-acid chain: Deoxyguanosinetriphosphate triphosphohydrolase-like protein (378 aa).

Positions 1–28 (MLAPFACQPGESRGRQKPESMSTFRSPF) are disordered. The HD domain occupies 62 to 198 (RLTHSIEVAQ…AAIADDVAYS (137 aa)).

The protein belongs to the dGTPase family. Type 2 subfamily.

The polypeptide is Deoxyguanosinetriphosphate triphosphohydrolase-like protein (Cereibacter sphaeroides (strain ATCC 17029 / ATH 2.4.9) (Rhodobacter sphaeroides)).